Consider the following 847-residue polypeptide: Guanine nucleotide exchange factor VAV3 (847 aa).

In terms of domain architecture, Calponin-homology (CH) spans 1-119; sequence MEPWKQCAQW…ETLSRLSRTP (119 aa). Tyr-141 carries the post-translational modification Phosphotyrosine. Positions 192–371 constitute a DH domain; that stretch reads IRSCCLAEIR…KDLAQYVNEV (180 aa). The region spanning 400 to 502 is the PH domain; sequence RPQGDGEIRI…WLEQFEMALS (103 aa). The Phorbol-ester/DAG-type zinc-finger motif lies at 513–562; the sequence is FHDFKMHTFTRVTSCRVCQMLLRGTFYQGYLCFKCGAKAHKECLGRVDNC. The sufficient for interaction with ROS1 stretch occupies residues 560–847; it reads DNCGRVNSVE…FPSTYVEEDE (288 aa). Positions 592-660 constitute an SH3 1 domain; that stretch reads PGLPKMQVIR…PSDAVKPSPC (69 aa). The 95-residue stretch at 672-766 folds into the SH2 domain; it reads WYAGPMERLQ…TLDTTLQFPY (95 aa). The 60-residue stretch at 788–847 folds into the SH3 2 domain; the sequence is KVLGIAIARYDFCARDMRELSLLKGDMVKIYTKMSANGWWRGEVNGRVGWFPSTYVEEDE.

Interacts with the PH domain of APS. Interacts with ROS1; constitutive interaction that mediates VAV3 phosphorylation. Interacts (via SH2 domains) with the phosphorylated form of EPHA2. In terms of processing, phosphorylated. Phosphorylation can be mediated by ROS1. In osteoclasts, undergoes tyrosine phosphorylation in response to CSF1. In terms of tissue distribution, abundantly expressed in osteoclasts and mature osteoblasts. Also expressed in bone marrow macrophages (at protein level):.

In terms of biological role, exchange factor for GTP-binding proteins RhoA, RhoG and, to a lesser extent, Rac1. Binds physically to the nucleotide-free states of those GTPases. Plays an important role in angiogenesis. Its recruitment by phosphorylated EPHA2 is critical for EFNA1-induced RAC1 GTPase activation and vascular endothelial cell migration and assembly. May be important for integrin-mediated signaling, at least in some cell types. In osteoclasts, along with SYK tyrosine kinase, required for signaling through integrin alpha-v/beta-1 (ITAGV-ITGB1), a crucial event for osteoclast proper cytoskeleton organization and function. This signaling pathway involves RAC1, but not RHO, activation. Necessary for proper wound healing. In the course of wound healing, required for the phagocytotic cup formation preceding macrophage phagocytosis of apoptotic neutrophils. Responsible for integrin beta-2-mediated macrophage adhesion and, to a lesser extent, contributes to beta-3-mediated adhesion. Does not affect integrin beta-1-mediated adhesion. The polypeptide is Guanine nucleotide exchange factor VAV3 (Vav3) (Mus musculus (Mouse)).